The sequence spans 252 residues: Expansin-A12 (252 aa).

An N-terminal signal peptide occupies residues 1–23 (MDMKGTYLVTVILLVSTLSVGMC). The 112-residue stretch at 45–156 (GGACGYDNPY…RRVGCKRRGG (112 aa)) folds into the Expansin-like EG45 domain. Residues 166 to 246 (NFNMVMISNV…SWWFGQTFSS (81 aa)) form the Expansin-like CBD domain.

This sequence belongs to the expansin family. Expansin A subfamily.

Its subcellular location is the secreted. It is found in the cell wall. The protein resides in the membrane. Causes loosening and extension of plant cell walls by disrupting non-covalent bonding between cellulose microfibrils and matrix glucans. No enzymatic activity has been found. This is Expansin-A12 (EXPA12) from Arabidopsis thaliana (Mouse-ear cress).